The sequence spans 505 residues: Exoglucanase 1 (505 aa).

The first 17 residues, 1-17, serve as a signal peptide directing secretion; sequence MYRKLAVISAFLAAARA. Q18 carries the pyrrolidone carboxylic acid modification. The tract at residues 18–449 is catalytic; the sequence is QQVCTQQAET…GSTGGNTGSN (432 aa). Intrachain disulfides connect C21-C88, C36-C41, C66-C87, and C77-C83. N-linked (GlcNAc...) asparagine glycans are attached at residues N93 and N126. Disulfide bonds link C151–C410, C185–C223, C189–C222, C243–C269, C251–C256, and C274–C344. E225 functions as the Nucleophile in the catalytic mechanism. E230 functions as the Proton donor/acceptor in the catalytic mechanism. Residues N283 and N397 are each glycosylated (N-linked (GlcNAc...) asparagine). Disordered regions lie at residues 399–423 and 440–472; these read TASTPGAKRGSCSTSSGVPAQVEAQ and GSTGGNTGSNPPGTSTTRAPPSSTGSSPTATQT. A compositionally biased stretch (polar residues) spans 409 to 423; it reads SCSTSSGVPAQVEAQ. Over residues 447–470 the composition is skewed to low complexity; it reads GSNPPGTSTTRAPPSSTGSSPTAT. The segment at 450-468 is linker; sequence PPGTSTTRAPPSSTGSSPT. In terms of domain architecture, CBM1 spans 469–505; the sequence is ATQTHYGQCGGTGWTGPTRCASGYTCQVLNPFYSQCL.

Belongs to the glycosyl hydrolase 7 (cellulase C) family. In terms of processing, O-glycosylated. O-glycosylation of the cellulase linker provides protection from proteolysis. Linker glycans also contribute to binding affinity of cellobiohydrolases to cellulose.

It is found in the secreted. The enzyme catalyses Hydrolysis of (1-&gt;4)-beta-D-glucosidic linkages in cellulose and cellotetraose, releasing cellobiose from the non-reducing ends of the chains.. Exocellobiohydrolases (CBH) that catalyzes the hydrolysis of 1,4-beta-D-glucosidic bonds in cellulose to release the disaccharide cellobiose. The degradation of cellulose involves an interplay between different cellulolytic enzymes. Hydrolysis starts with endoglucanases (EGs), which cut internal beta-1,4-glucosidic bonds in cellulose to reduce the polymerization degree of the substrate and create new chain ends for exocellobiohydrolases (CBHs). The CBHs release the disaccharide cellobiose from the non-reducing end of the cellulose polymer chain. Finally, beta-1,4-glucosidases hydrolyze the cellobiose and other short cello-oligosaccharides into glucose units. The sequence is that of Exoglucanase 1 (cbh1) from Trichoderma harzianum (Hypocrea lixii).